A 127-amino-acid polypeptide reads, in one-letter code: Anti-adapter protein IraD (127 aa).

This sequence belongs to the GpW/Gp25 family. IraD subfamily. Interacts with RssB.

The protein resides in the cytoplasm. Inhibits RpoS proteolysis by regulating RssB activity, thereby increasing the stability of the sigma stress factor RpoS during oxidative stress. Its effect on RpoS stability is due to its interaction with RssB, which probably blocks the interaction of RssB with RpoS, and the consequent delivery of the RssB-RpoS complex to the ClpXP protein degradation pathway. The sequence is that of Anti-adapter protein IraD from Escherichia coli O127:H6 (strain E2348/69 / EPEC).